The primary structure comprises 403 residues: Phosphopentomutase (403 aa).

Positions 13, 298, 303, 339, 340, and 351 each coordinate Mn(2+).

Belongs to the phosphopentomutase family. Mn(2+) is required as a cofactor.

It localises to the cytoplasm. It carries out the reaction 2-deoxy-alpha-D-ribose 1-phosphate = 2-deoxy-D-ribose 5-phosphate. It catalyses the reaction alpha-D-ribose 1-phosphate = D-ribose 5-phosphate. It participates in carbohydrate degradation; 2-deoxy-D-ribose 1-phosphate degradation; D-glyceraldehyde 3-phosphate and acetaldehyde from 2-deoxy-alpha-D-ribose 1-phosphate: step 1/2. Isomerase that catalyzes the conversion of deoxy-ribose 1-phosphate (dRib-1-P) and ribose 1-phosphate (Rib-1-P) to deoxy-ribose 5-phosphate (dRib-5-P) and ribose 5-phosphate (Rib-5-P), respectively. The protein is Phosphopentomutase of Streptococcus equi subsp. zooepidemicus (strain MGCS10565).